The chain runs to 246 residues: UPF0736 protein GWCH70_0753 (246 aa).

It belongs to the UPF0736 family.

This chain is UPF0736 protein GWCH70_0753, found in Geobacillus sp. (strain WCH70).